The chain runs to 405 residues: Pyruvate decarboxylase 2 (405 aa).

A thiamine pyrophosphate binding region spans residues 232 to 314 (DSWFNCQKLK…FLINNGGYTI (83 aa)). Residues D282, N309, and G311 each coordinate Mg(2+). E315 is a binding site for substrate.

It belongs to the TPP enzyme family. Homotetramer. It depends on a metal cation as a cofactor. The cofactor is thiamine diphosphate.

It catalyses the reaction a 2-oxocarboxylate + H(+) = an aldehyde + CO2. This is Pyruvate decarboxylase 2 (PDC2) from Pisum sativum (Garden pea).